Consider the following 69-residue polypeptide: Large ribosomal subunit protein uL29 (69 aa).

Belongs to the universal ribosomal protein uL29 family.

The chain is Large ribosomal subunit protein uL29 from Rhodopseudomonas palustris (strain BisB5).